Consider the following 353-residue polypeptide: Mitochondrial import inner membrane translocase subunit TIM50 (353 aa).

Residues 1–21 constitute a mitochondrion transit peptide; sequence MAASAALFSRLRSGLRVGARG. Topologically, residues 22-65 are mitochondrial matrix; it reads LCTRLAPPPPRTPEQVTEIANRGGSKAQGPQHQPGSEGPSYAKK. Residues 24-59 form a disordered region; it reads TRLAPPPPRTPEQVTEIANRGGSKAQGPQHQPGSEG. Residues 66–86 traverse the membrane as a helical segment; that stretch reads IALWIAGLLGAGGTVSIVYIF. At 87–353 the chain is on the mitochondrial intermembrane side; that stretch reads GNNPVDENGT…SRLWPRSKQP (267 aa). The FCP1 homology domain occupies 143-286; that stretch reads YYQPPYTLVL…LDLSAFLKTI (144 aa). The residue at position 341 (serine 341) is a Phosphoserine.

Belongs to the TIM50 family. Component of the TIM23 complex at least composed of TIMM23, TIMM17 (TIMM17A or TIMM17B) and TIMM50; within this complex, directly interacts with TIMM23. The complex interacts with the TIMM44 component of the PAM complex and with DNAJC15.

The protein resides in the mitochondrion inner membrane. Its function is as follows. Essential component of the TIM23 complex, a complex that mediates the translocation of transit peptide-containing proteins across the mitochondrial inner membrane. Has some phosphatase activity in vitro; however such activity may not be relevant in vivo. The polypeptide is Mitochondrial import inner membrane translocase subunit TIM50 (Timm50) (Mus musculus (Mouse)).